The primary structure comprises 690 residues: F-box/LRR-repeat protein 5 (690 aa).

A hemerythrin-like region spans residues 1–159 (MAPFPDEVDV…IKKKVIAQHC (159 aa)). The Fe(3+) site is built by His15, His57, Glu58, Glu61, His80, His126, and Glu130. An F-box domain is found at 202-248 (STGITHLPPEVMLSIFSYLNPQELCRCSQVSTKWSQLAKTGSLWKHL). 7 LRR repeats span residues 340 to 364 (SSAV…LDLT), 365 to 392 (QTDI…DLSG), 393 to 418 (CEKI…QSGF), 478 to 507 (VWML…CVME), 575 to 606 (TTLP…SLSG), 607 to 634 (CYQI…NLSG), and 635 to 660 (CLTV…YFYY). The [2Fe-2S] cluster site is built by Cys661, Cys675, Cys685, and Cys686.

Part of a SCF (SKP1-cullin-F-box) protein ligase complex. Interacts with ACO1/IRP1, IREB2/IRP2; the interaction depends on the [2Fe-2S] cluster. Interacts with DCTN1/p150-glued. [2Fe-2S] cluster serves as cofactor. In terms of processing, polybiquitinated upon iron and oxygen depletion, leading to its degradation by the proteasome. Ubiquitination is regulated by the hemerythrin-like region that acts as an oxygen and iron sensor. Undergoes constitutive ubiquitin-dependent degradation at the steady state by HERC2. As to expression, ubiquitously expressed. Highly expressed in early embryogenesis with expression decreasing as the embryo progresses through development (E11 and E15).

It is found in the cytoplasm. The protein resides in the perinuclear region. Its subcellular location is the nucleus. It functions in the pathway protein modification; protein ubiquitination. With respect to regulation, an iron-sulfur cluster promotes IRP2 polyubiquitination and degradation in response to both iron and oxygen concentrations. In terms of biological role, component of some SCF (SKP1-cullin-F-box) protein ligase complex that plays a central role in iron homeostasis by promoting the ubiquitination and subsequent degradation of IREB2/IRP2. The C-terminal domain of FBXL5 contains a redox-sensitive [2Fe-2S] cluster that, upon oxidation, promotes binding to IRP2 to effect its oxygen-dependent degradation. Under iron deficiency conditions, the N-terminal hemerythrin-like (Hr) region, which contains a diiron metal center, cannot bind iron and undergoes conformational changes that destabilize the FBXL5 protein and cause its ubiquitination and degradation. When intracellular iron levels start rising, the Hr region is stabilized. Additional increases in iron levels facilitate the assembly and incorporation of a redox active [2Fe-2S] cluster in the C-terminal domain. Only when oxygen level is high enough to maintain the cluster in its oxidized state can FBXL5 recruit IRP2 as a substrate for polyubiquination and degradation. Promotes ubiquitination and subsequent degradation of the dynactin complex component DCTN1. Within the nucleus, promotes the ubiquitination of SNAI1; preventing its interaction with DNA and promoting its degradation. Negatively regulates DNA damage response by mediating the ubiquitin-proteasome degradation of the DNA repair protein NABP2. This Mus musculus (Mouse) protein is F-box/LRR-repeat protein 5 (Fbxl5).